The chain runs to 339 residues: RxLR effector protein SFI4 (339 aa).

The signal sequence occupies residues 1–24 (MRVLRVTFLWALLLLVAFSASVYA). A RxLR-dEER motif is present at residues 51 to 74 (RGLRNSGMKLNDAKDFKGAIAKLR). 4 TPR repeats span residues 106-139 (AQIL…VEKI), 190-223 (IEAS…QNGE), 232-265 (AELY…FRQR), and 274-307 (AFSL…AVQI).

The protein belongs to the RxLR effector family.

It is found in the secreted. It localises to the host nucleus. Its subcellular location is the host cytoplasm. Functionally, effector that suppresses flg22-induced post-translational MAP kinase activation in tomato but not in Arabidopsis. The perception of highly conserved pathogen- or microbe-associated molecular patterns (PAMPs/MAMPs), such as flg22, triggers converging signaling pathways recruiting MAP kinase cascades and inducing transcriptional re-programming, yielding a generic antimicrobial response. The chain is RxLR effector protein SFI4 from Phytophthora infestans (strain T30-4) (Potato late blight agent).